The primary structure comprises 227 residues: LysM and putative peptidoglycan-binding domain-containing protein 1 (227 aa).

Over residues 1–11 the composition is skewed to pro residues; that stretch reads MASPSRQPPPG. Residues 1-20 form a disordered region; it reads MASPSRQPPPGGSGLLHGSR. A phosphoserine mark is found at Ser-23 and Ser-33. Residues 40-84 enclose the LysM domain; it reads LEHQLEPGDTLAGLALKYGVTMEQIKRANRLYTNDSIFLKKTLYI. A disordered region spans residues 95 to 150; the sequence is NGLDSEEEKDGEEEVRPSNDEVWPHSTERKKQETGAGRANGEVFPTPGQETPTPIH. A compositionally biased stretch (acidic residues) spans 98 to 107; sequence DSEEEKDGEE. The residue at position 99 (Ser-99) is a Phosphoserine. Positions 108–127 are enriched in basic and acidic residues; that stretch reads EVRPSNDEVWPHSTERKKQE. Ser-166, Ser-181, Ser-194, and Ser-212 each carry phosphoserine. The interval 172–196 is disordered; the sequence is AAQKLKKGESGVPGEDAGLHLSSPR.

The protein is LysM and putative peptidoglycan-binding domain-containing protein 1 (LYSMD1) of Macaca fascicularis (Crab-eating macaque).